A 2191-amino-acid chain; its full sequence is Genome polyprotein (2191 aa).

A lipid anchor (N-myristoyl glycine; by host) is attached at glycine 2. Over glycine 2–glutamine 1501 the chain is Cytoplasmic. The segment at phenylalanine 566 to valine 582 is amphipathic alpha-helix. Catalysis depends on for protease 2A activity residues histidine 878 and aspartate 896. Cysteine 913 and cysteine 915 together coordinate Zn(2+). The active-site For protease 2A activity is cysteine 967. Zn(2+) contacts are provided by cysteine 973 and histidine 975. The membrane-binding stretch occupies residues asparagine 1107–glutamine 1179. Residues asparagine 1107–threonine 1245 are oligomerization. Residues alanine 1128–glutamine 1132 form an RNA-binding region. The region spanning glutamate 1211–asparagine 1367 is the SF3 helicase domain. Cysteine 1375, cysteine 1387, and cysteine 1392 together coordinate Zn(2+). The segment at cysteine 1375 to cysteine 1392 adopts a C4-type; degenerate zinc-finger fold. Residues glutamate 1419–valine 1426 form an RNA-binding region. Residues leucine 1430–glutamine 1435 form an oligomerization region. The stretch at alanine 1502–tyrosine 1517 is an intramembrane region. Residues lysine 1518–phenylalanine 2191 lie on the Cytoplasmic side of the membrane. O-(5'-phospho-RNA)-tyrosine is present on tyrosine 1527. Positions glycine 1547 to phenylalanine 1725 constitute a Peptidase C3 domain. Residues histidine 1586, glutamate 1617, and cysteine 1693 each act as for protease 3C activity in the active site. Residues glycine 1956–leucine 2072 enclose the RdRp catalytic domain. Positions 1962 and 2058 each coordinate Mg(2+).

This sequence belongs to the picornaviruses polyprotein family. In terms of assembly, interacts with capsid protein VP1 and capsid protein VP3 to form heterotrimeric protomers. As to quaternary structure, interacts with capsid protein VP0, and capsid protein VP3 to form heterotrimeric protomers. Five protomers subsequently associate to form pentamers which serve as building blocks for the capsid. Interacts with capsid protein VP2, capsid protein VP3 and capsid protein VP4 following cleavage of capsid protein VP0. Interacts with host CD55 and FCGRT; these interactions promote virus attachment to the host cell and subsequent internalization. Interacts with capsid protein VP1 and capsid protein VP3 in the mature capsid. Interacts with host CD55 and FCGRT; these interactions promote virus attachment to the host cell and subsequent internalization. In terms of assembly, interacts with capsid protein VP0 and capsid protein VP1 to form heterotrimeric protomers. Five protomers subsequently associate to form pentamers which serve as building blocks for the capsid. Interacts with capsid protein VP4 in the mature capsid. Interacts with protein 2C; this interaction may be important for virion morphogenesis. Interacts with host FCGRT; this interaction promotes virus attachment to the host cell and subsequent internalization. As to quaternary structure, interacts with capsid protein VP1 and capsid protein VP3. Homodimer. In terms of assembly, homohexamer; forms a hexameric ring structure with 6-fold symmetry characteristic of AAA+ ATPases. Interacts (via N-terminus) with host RTN3 (via reticulon domain); this interaction is important for viral replication. Interacts with capsid protein VP3; this interaction may be important for virion morphogenesis. As to quaternary structure, interacts with protein 3CD. Homodimer. Interacts with host GBF1. Interacts (via GOLD domain) with host ACBD3 (via GOLD domain); this interaction allows the formation of a viral protein 3A/ACBD3 heterotetramer with a 2:2 stoichiometry, which will stimulate the recruitment of host PI4KB in order to synthesize PI4P at the viral RNA replication sites. In terms of assembly, interacts with RNA-directed RNA polymerase. As to quaternary structure, interacts with protein 3AB and with RNA-directed RNA polymerase. Interacts with Viral protein genome-linked and with protein 3CD. It depends on Mg(2+) as a cofactor. Specific enzymatic cleavages in vivo by the viral proteases yield processing intermediates and the mature proteins. Post-translationally, myristoylation is required for the formation of pentamers during virus assembly. Further assembly of 12 pentamers and a molecule of genomic RNA generates the provirion. In terms of processing, during virion maturation, immature virions are rendered infectious following cleavage of VP0 into VP4 and VP2. This maturation seems to be an autocatalytic event triggered by the presence of RNA in the capsid and it is followed by a conformational change infectious virion. Myristoylation is required during RNA encapsidation and formation of the mature virus particle. Post-translationally, VPg is uridylylated by the polymerase into VPg-pUpU. This acts as a nucleotide-peptide primer for the genomic RNA replication.

The protein resides in the virion. It is found in the host cytoplasm. The protein localises to the host cytoplasmic vesicle membrane. It localises to the host nucleus. It carries out the reaction a ribonucleoside 5'-triphosphate + H2O = a ribonucleoside 5'-diphosphate + phosphate + H(+). The enzyme catalyses Selective cleavage of Tyr-|-Gly bond in the picornavirus polyprotein.. The catalysed reaction is RNA(n) + a ribonucleoside 5'-triphosphate = RNA(n+1) + diphosphate. It catalyses the reaction Selective cleavage of Gln-|-Gly bond in the poliovirus polyprotein. In other picornavirus reactions Glu may be substituted for Gln, and Ser or Thr for Gly.. With respect to regulation, replication or transcription is subject to high level of random mutations by the nucleotide analog ribavirin. Forms an icosahedral capsid of pseudo T=3 symmetry with capsid proteins VP2 and VP3. The capsid is 300 Angstroms in diameter, composed of 60 copies of each capsid protein and enclosing the viral positive strand RNA genome. Capsid protein VP1 mainly forms the vertices of the capsid. Capsid protein VP1 interacts with host cell receptor to provide virion attachment to target host cells. This attachment induces virion internalization. Tyrosine kinases are probably involved in the entry process. After binding to its receptor, the capsid undergoes conformational changes. Capsid protein VP1 N-terminus (that contains an amphipathic alpha-helix) and capsid protein VP4 are externalized. Together, they shape a pore in the host membrane through which viral genome is translocated to host cell cytoplasm. Functionally, forms an icosahedral capsid of pseudo T=3 symmetry with capsid proteins VP2 and VP3. The capsid is 300 Angstroms in diameter, composed of 60 copies of each capsid protein and enclosing the viral positive strand RNA genome. In terms of biological role, lies on the inner surface of the capsid shell. After binding to the host receptor, the capsid undergoes conformational changes. Capsid protein VP4 is released, Capsid protein VP1 N-terminus is externalized, and together, they shape a pore in the host membrane through which the viral genome is translocated into the host cell cytoplasm. Its function is as follows. Component of immature procapsids, which is cleaved into capsid proteins VP4 and VP2 after maturation. Allows the capsid to remain inactive before the maturation step. Cysteine protease that cleaves viral polyprotein and specific host proteins. It is responsible for the autocatalytic cleavage between the P1 and P2 regions, which is the first cleavage occurring in the polyprotein. Also cleaves the host translation initiation factor EIF4G1, in order to shut down the capped cellular mRNA translation. Inhibits the host nucleus-cytoplasm protein and RNA trafficking by cleaving host members of the nuclear pores. Counteracts stress granule formation probably by antagonizing its assembly or promoting its dissassembly. Functionally, plays an essential role in the virus replication cycle by acting as a viroporin. Creates a pore in the host endoplasmic reticulum and as a consequence releases Ca2+ in the cytoplasm of infected cell. In turn, high levels of cytoplasmic calcium may trigger membrane trafficking and transport of viral ER-associated proteins to viroplasms, sites of viral genome replication. In terms of biological role, induces and associates with structural rearrangements of intracellular membranes. Displays RNA-binding, nucleotide binding and NTPase activities. May play a role in virion morphogenesis and viral RNA encapsidation by interacting with the capsid protein VP3. Its function is as follows. Localizes the viral replication complex to the surface of membranous vesicles. Together with protein 3CD binds the Cis-Active RNA Element (CRE) which is involved in RNA synthesis initiation. Acts as a cofactor to stimulate the activity of 3D polymerase, maybe through a nucleid acid chaperone activity. Localizes the viral replication complex to the surface of membranous vesicles. It inhibits host cell endoplasmic reticulum-to-Golgi apparatus transport and causes the disassembly of the Golgi complex, possibly through GBF1 interaction. This would result in depletion of MHC, trail receptors and IFN receptors at the host cell surface. Plays an essential role in viral RNA replication by recruiting ACBD3 and PI4KB at the viral replication sites, thereby allowing the formation of the rearranged membranous structures where viral replication takes place. Functionally, acts as a primer for viral RNA replication and remains covalently bound to viral genomic RNA. VPg is uridylylated prior to priming replication into VPg-pUpU. The oriI viral genomic sequence may act as a template for this. The VPg-pUpU is then used as primer on the genomic RNA poly(A) by the RNA-dependent RNA polymerase to replicate the viral genome. During genome replication, the VPg-RNA linkage is removed by the host TDP2, thereby accelerating replication. During the late stage of the replication cycle, host TDP2 is excluded from sites of viral RNA synthesis and encapsidation, allowing for the generation of progeny virions. In terms of biological role, involved in the viral replication complex and viral polypeptide maturation. It exhibits protease activity with a specificity and catalytic efficiency that is different from protease 3C. Protein 3CD binds to the 5'UTR of the viral genome. Its function is as follows. Replicates the viral genomic RNA on the surface of intracellular membranes. May form linear arrays of subunits that propagate along a strong head-to-tail interaction called interface-I. Covalently attaches UMP to a tyrosine of VPg, which is used to prime RNA synthesis. The positive stranded RNA genome is first replicated at virus induced membranous vesicles, creating a dsRNA genomic replication form. This dsRNA is then used as template to synthesize positive stranded RNA genomes. ss(+)RNA genomes are either translated, replicated or encapsidated. Major viral protease that mediates proteolytic processing of the polyprotein. Cleaves host EIF5B, contributing to host translation shutoff. Also cleaves host PABPC1, contributing to host translation shutoff. Cleaves host NLRP1, triggers host N-glycine-mediated degradation of the autoinhibitory NLRP1 N-terminal fragment. The sequence is that of Genome polyprotein from Echovirus 6 (strain Charles).